The primary structure comprises 277 residues: Probable endonuclease 4 (277 aa).

Residues histidine 70, histidine 108, glutamate 143, aspartate 176, histidine 179, histidine 210, aspartate 223, histidine 225, and glutamate 255 each contribute to the Zn(2+) site.

Belongs to the AP endonuclease 2 family. Requires Zn(2+) as cofactor.

The enzyme catalyses Endonucleolytic cleavage to 5'-phosphooligonucleotide end-products.. Functionally, endonuclease IV plays a role in DNA repair. It cleaves phosphodiester bonds at apurinic or apyrimidinic (AP) sites, generating a 3'-hydroxyl group and a 5'-terminal sugar phosphate. In Mycoplasmopsis synoviae (strain 53) (Mycoplasma synoviae), this protein is Probable endonuclease 4.